Here is a 240-residue protein sequence, read N- to C-terminus: 3-deoxy-D-manno-octulosonic acid kinase (240 aa).

Aspartate 170 is an active-site residue.

It belongs to the protein kinase superfamily. KdkA/RfaP family.

Its subcellular location is the cell inner membrane. The enzyme catalyses an alpha-Kdo-(2-&gt;6)-lipid IVA + ATP = a 4-O-phospho-alpha-Kdo-(2-&gt;6)-lipid IVA + ADP + H(+). The protein operates within bacterial outer membrane biogenesis; LPS core biosynthesis. Functionally, catalyzes the ATP-dependent phosphorylation of the 3-deoxy-D-manno-octulosonic acid (Kdo) residue in Kdo-lipid IV(A) at the 4-OH position. The chain is 3-deoxy-D-manno-octulosonic acid kinase from Actinobacillus succinogenes (strain ATCC 55618 / DSM 22257 / CCUG 43843 / 130Z).